A 449-amino-acid polypeptide reads, in one-letter code: Tubulin alpha chain (449 aa).

Residues Gln11, Glu71, Ser140, Gly144, Thr145, Thr179, Asn206, and Asn228 each coordinate GTP. Glu71 serves as a coordination point for Mg(2+). The active site involves Glu254.

This sequence belongs to the tubulin family. As to quaternary structure, dimer of alpha and beta chains. A typical microtubule is a hollow water-filled tube with an outer diameter of 25 nm and an inner diameter of 15 nM. Alpha-beta heterodimers associate head-to-tail to form protofilaments running lengthwise along the microtubule wall with the beta-tubulin subunit facing the microtubule plus end conferring a structural polarity. Microtubules usually have 13 protofilaments but different protofilament numbers can be found in some organisms and specialized cells. The cofactor is Mg(2+).

It localises to the cytoplasm. The protein localises to the cytoskeleton. It catalyses the reaction GTP + H2O = GDP + phosphate + H(+). Its function is as follows. Tubulin is the major constituent of microtubules, a cylinder consisting of laterally associated linear protofilaments composed of alpha- and beta-tubulin heterodimers. Microtubules grow by the addition of GTP-tubulin dimers to the microtubule end, where a stabilizing cap forms. Below the cap, tubulin dimers are in GDP-bound state, owing to GTPase activity of alpha-tubulin. The protein is Tubulin alpha chain (TUB1) of Gibberella zeae (strain ATCC MYA-4620 / CBS 123657 / FGSC 9075 / NRRL 31084 / PH-1) (Wheat head blight fungus).